The primary structure comprises 375 residues: Trichodiene synthase (375 aa).

It belongs to the trichodiene synthase family.

It catalyses the reaction (2E,6E)-farnesyl diphosphate = trichodiene + diphosphate. It functions in the pathway sesquiterpene biosynthesis; trichothecene biosynthesis. TS is a member of the terpene cyclase group of enzymes. It catalyzes the isomerization and cyclization of farnesyl pyro-phosphate to form trichodiene, the first cyclic intermediate in the biosynthetic pathway for trichothecenes. It serves to branch trichothecene biosynthesis from the isoprenoid pathway. This is Trichodiene synthase (TRI5) from Fusarium acaciae-mearnsii.